The sequence spans 169 residues: Protein GrpE (169 aa).

The interval 1-25 is disordered; it reads MSEEKQNGQIQEETVENSENQNNEL. The segment covering 7-23 has biased composition (polar residues); the sequence is NGQIQEETVENSENQNN.

This sequence belongs to the GrpE family. As to quaternary structure, homodimer.

The protein resides in the cytoplasm. Participates actively in the response to hyperosmotic and heat shock by preventing the aggregation of stress-denatured proteins, in association with DnaK and GrpE. It is the nucleotide exchange factor for DnaK and may function as a thermosensor. Unfolded proteins bind initially to DnaJ; upon interaction with the DnaJ-bound protein, DnaK hydrolyzes its bound ATP, resulting in the formation of a stable complex. GrpE releases ADP from DnaK; ATP binding to DnaK triggers the release of the substrate protein, thus completing the reaction cycle. Several rounds of ATP-dependent interactions between DnaJ, DnaK and GrpE are required for fully efficient folding. The chain is Protein GrpE from Campylobacter lari (strain RM2100 / D67 / ATCC BAA-1060).